The sequence spans 376 residues: Protein-glutamate methylesterase/protein-glutamine glutaminase 1 (376 aa).

A Response regulatory domain is found at 4–121 (KVLVVDDSSF…ARNRDEAVSL (118 aa)). D55 bears the 4-aspartylphosphate mark. The disordered stretch occupies residues 138-174 (RPVASSTPVQERPQSTLNRPTTGLRREAPAQAPVSRA). Over residues 141-158 (ASSTPVQERPQSTLNRPT) the composition is skewed to polar residues. In terms of domain architecture, CheB-type methylesterase spans 183–376 (SGKKYQLTAI…ERMLVEVGLA (194 aa)). Active-site residues include S195, H222, and D318.

Belongs to the CheB family. In terms of processing, phosphorylated by CheA. Phosphorylation of the N-terminal regulatory domain activates the methylesterase activity.

It localises to the cytoplasm. The catalysed reaction is [protein]-L-glutamate 5-O-methyl ester + H2O = L-glutamyl-[protein] + methanol + H(+). It carries out the reaction L-glutaminyl-[protein] + H2O = L-glutamyl-[protein] + NH4(+). Functionally, involved in chemotaxis. Part of a chemotaxis signal transduction system that modulates chemotaxis in response to various stimuli. Catalyzes the demethylation of specific methylglutamate residues introduced into the chemoreceptors (methyl-accepting chemotaxis proteins or MCP) by CheR. Also mediates the irreversible deamidation of specific glutamine residues to glutamic acid. This chain is Protein-glutamate methylesterase/protein-glutamine glutaminase 1, found in Vibrio vulnificus (strain CMCP6).